A 268-amino-acid polypeptide reads, in one-letter code: Hydroxyethylthiazole kinase (268 aa).

Residue M44 coordinates substrate. The ATP site is built by R119 and S165. Substrate is bound at residue G192.

This sequence belongs to the Thz kinase family. Requires Mg(2+) as cofactor.

It catalyses the reaction 5-(2-hydroxyethyl)-4-methylthiazole + ATP = 4-methyl-5-(2-phosphooxyethyl)-thiazole + ADP + H(+). The protein operates within cofactor biosynthesis; thiamine diphosphate biosynthesis; 4-methyl-5-(2-phosphoethyl)-thiazole from 5-(2-hydroxyethyl)-4-methylthiazole: step 1/1. Catalyzes the phosphorylation of the hydroxyl group of 4-methyl-5-beta-hydroxyethylthiazole (THZ). The chain is Hydroxyethylthiazole kinase from Corynebacterium glutamicum (strain R).